The sequence spans 453 residues: Choline kinase alpha (453 aa).

The disordered stretch occupies residues 22 to 81 (CGGSAAPTPGVGQQRDAAGELESKQLGGRSQPLALPPPPPPPLPLPPPPSPPLADEQPEP). Positions 55 to 73 (ALPPPPPPPLPLPPPPSPP) are enriched in pro residues. Residue S71 is modified to Phosphoserine. Residues 113-119 (RGGLSNM), R142, and 203-209 (QFIPSRR) contribute to the ATP site. 115–117 (GLS) serves as a coordination point for phosphocholine. N6-acetyllysine is present on K243. S275 carries the post-translational modification Phosphoserine. The ATP site is built by Q304 and D326.

Belongs to the choline/ethanolamine kinase family. As to quaternary structure, heterodimer with CHKB. Homodimer. In terms of assembly, monomer; acetylation by KAT5 promotes dissociation of the homodimer and monomerization. In terms of processing, phosphorylated at Ser-275 by AMPK in response to glucose deprivation, leading to localization to lipid droplets. Acetylated by KAT5 at Lys-243 following phosphorylation by AMPK, leading to monomerization and conversion into a tyrosine-protein kinase. As to expression, testis, brain, lung, kidney and liver.

Its subcellular location is the cytoplasm. The protein localises to the cytosol. The protein resides in the lipid droplet. The enzyme catalyses choline + ATP = phosphocholine + ADP + H(+). It catalyses the reaction ethanolamine + ATP = phosphoethanolamine + ADP + H(+). It carries out the reaction L-tyrosyl-[protein] + ATP = O-phospho-L-tyrosyl-[protein] + ADP + H(+). The protein operates within phospholipid metabolism; phosphatidylcholine biosynthesis; phosphocholine from choline: step 1/1. It functions in the pathway phospholipid metabolism; phosphatidylethanolamine biosynthesis; phosphatidylethanolamine from ethanolamine: step 1/3. Plays a key role in phospholipid biosynthesis by catalyzing the phosphorylation of free choline to phosphocholine, the first step in phosphatidylcholine biosynthesis. Also phosphorylates ethanolamine, thereby contributing to phosphatidylethanolamine biosynthesis. Has higher activity with choline. Functionally, this isoform plays a key role in lipolysis of lipid droplets following glucose deprivation. In response to glucose deprivation, phosphorylated by AMPK, promoting localization to lipid droplets. Phosphorylation is followed by acetylation by KAT5, leading to dissociation of the homodimer into a monomer. Monomeric CHKA isoform 1 is converted into a tyrosine-protein kinase, which phosphorylates lipid droplet structural proteins PLIN2 and PLIN3, leading to lipolysis of lipid droplets. This is Choline kinase alpha (Chka) from Rattus norvegicus (Rat).